A 209-amino-acid chain; its full sequence is Octanoyltransferase (209 aa).

Positions 30–209 (DNEPEIVYLV…IQTEFNKIFK (180 aa)) constitute a BPL/LPL catalytic domain. Residues 69–76 (RGGKFTFH), 143–145 (AIG), and 156–158 (GIA) contribute to the substrate site. The Acyl-thioester intermediate role is filled by Cys174.

It belongs to the LipB family.

It localises to the cytoplasm. It carries out the reaction octanoyl-[ACP] + L-lysyl-[protein] = N(6)-octanoyl-L-lysyl-[protein] + holo-[ACP] + H(+). It functions in the pathway protein modification; protein lipoylation via endogenous pathway; protein N(6)-(lipoyl)lysine from octanoyl-[acyl-carrier-protein]: step 1/2. In terms of biological role, catalyzes the transfer of endogenously produced octanoic acid from octanoyl-acyl-carrier-protein onto the lipoyl domains of lipoate-dependent enzymes. Lipoyl-ACP can also act as a substrate although octanoyl-ACP is likely to be the physiological substrate. The polypeptide is Octanoyltransferase (Rickettsia prowazekii (strain Madrid E)).